A 170-amino-acid polypeptide reads, in one-letter code: Mediator of RNA polymerase II transcription subunit 10 (170 aa).

It belongs to the Mediator complex subunit 10 family. In terms of assembly, component of the Mediator complex.

The protein resides in the nucleus. Component of the Mediator complex, a coactivator involved in the regulated transcription of nearly all RNA polymerase II-dependent genes. Mediator functions as a bridge to convey information from gene-specific regulatory proteins to the basal RNA polymerase II transcription machinery. Mediator is recruited to promoters by direct interactions with regulatory proteins and serves as a scaffold for the assembly of a functional preinitiation complex with RNA polymerase II and the general transcription factors. The polypeptide is Mediator of RNA polymerase II transcription subunit 10 (NUT2) (Candida albicans (strain SC5314 / ATCC MYA-2876) (Yeast)).